The chain runs to 185 residues: Ribosome-recycling factor (185 aa).

It belongs to the RRF family.

Its subcellular location is the cytoplasm. Responsible for the release of ribosomes from messenger RNA at the termination of protein biosynthesis. May increase the efficiency of translation by recycling ribosomes from one round of translation to another. This chain is Ribosome-recycling factor, found in Desulfatibacillum aliphaticivorans.